The sequence spans 242 residues: Probable transcriptional regulatory protein mhp472 (242 aa).

Belongs to the TACO1 family.

It is found in the cytoplasm. This chain is Probable transcriptional regulatory protein mhp472, found in Mesomycoplasma hyopneumoniae (strain 232) (Mycoplasma hyopneumoniae).